A 258-amino-acid chain; its full sequence is Tryptophan synthase alpha chain (258 aa).

Residues Glu-47 and Asp-58 each act as proton acceptor in the active site.

This sequence belongs to the TrpA family. Tetramer of two alpha and two beta chains.

It catalyses the reaction (1S,2R)-1-C-(indol-3-yl)glycerol 3-phosphate + L-serine = D-glyceraldehyde 3-phosphate + L-tryptophan + H2O. It functions in the pathway amino-acid biosynthesis; L-tryptophan biosynthesis; L-tryptophan from chorismate: step 5/5. Functionally, the alpha subunit is responsible for the aldol cleavage of indoleglycerol phosphate to indole and glyceraldehyde 3-phosphate. This Bacillus thuringiensis subsp. konkukian (strain 97-27) protein is Tryptophan synthase alpha chain.